A 177-amino-acid chain; its full sequence is O-acetyl-ADP-ribose deacetylase (177 aa).

The Macro domain maps to 1-175 (MKSRIHVLQG…LYNRLLTQQG (175 aa)). Substrate-binding positions include 11 to 12 (DI), N25, 33 to 35 (GVD), and 122 to 126 (STGVY). Residue D35 is the Proton acceptor of the active site.

This sequence belongs to the MacroD-type family. YmdB subfamily. Homodimer. Interacts with RNase III.

It catalyses the reaction 3''-O-acetyl-ADP-D-ribose + H2O = ADP-D-ribose + acetate + H(+). It carries out the reaction 2''-O-acetyl-ADP-D-ribose + H2O = ADP-D-ribose + acetate + H(+). Functionally, deacetylates O-acetyl-ADP ribose to yield ADP-ribose and free acetate. Down-regulates ribonuclease 3 (RNase III) activity. Acts by interacting directly with the region of the ribonuclease that is required for dimerization/activation. The chain is O-acetyl-ADP-ribose deacetylase from Escherichia fergusonii (strain ATCC 35469 / DSM 13698 / CCUG 18766 / IAM 14443 / JCM 21226 / LMG 7866 / NBRC 102419 / NCTC 12128 / CDC 0568-73).